We begin with the raw amino-acid sequence, 180 residues long: Outer membrane protein YfaZ (180 aa).

The signal sequence occupies residues 1-21 (MKKIALAGLAGMLLVSASVNA).

It localises to the cell outer membrane. The chain is Outer membrane protein YfaZ (yfaZ) from Escherichia coli (strain K12).